Consider the following 1069-residue polypeptide: Protocadherin-7 (1069 aa).

The first 28 residues, 1–28 (MLRMRTAGWARGWCLGCCLLLPLSLSLA), serve as a signal peptide directing secretion. 7 Cadherin domains span residues 29–143 (AAKQ…TPTF), 144–308 (PSPV…SPRF), 309–415 (EKSV…VPSI), 424–535 (PLKD…PPMF), 536–639 (GQSV…DPKF), 640–742 (MQDV…APTV), and 745–862 (PKNI…IPLT). Residues 29–879 (AAKQLLRYRL…SYEISKQRLS (851 aa)) lie on the Extracellular side of the membrane. Asn-79 is a glycosylation site (N-linked (GlcNAc...) asparagine). The tract at residues 182–242 (LLQEPGGGGS…GGTNPGGRSS (61 aa)) is disordered. Positions 207-221 (PGGGGNGASGGGSGG) are enriched in gly residues. Asn-689, Asn-747, Asn-780, Asn-822, Asn-840, and Asn-845 each carry an N-linked (GlcNAc...) asparagine glycan. The chain crosses the membrane as a helical span at residues 880-900 (IVIGVVAGIMTVILIILIVVM). Residues 901–1069 (ARYCRSKNKN…RLHPYITVFG (169 aa)) are Cytoplasmic-facing. The disordered stretch occupies residues 910–988 (NGYEAGKKDH…RYRSVNGGPG (79 aa)). The span at 930–944 (KSKKPKKDKKNKKSK) shows a compositional bias: basic residues. Ser-989 and Ser-1011 each carry phosphoserine.

As to expression, expressed predominantly in brain and heart and at lower levels in various other tissues.

It localises to the cell membrane. In Homo sapiens (Human), this protein is Protocadherin-7 (PCDH7).